We begin with the raw amino-acid sequence, 235 residues long: MMMMQSRKIWYYRITLIILLFAMLLAWALLPGVHEFINRSVAAFAAVDQQGIERFIQSYGALAAVVSFLLMILQAIAAPLPAFLITFANASLFGAFWGGLLSWTSSMAGAALCFFIARVMGREVVEKLTGKTVLDSMDGFFTRYGKHTILVCRLLPFVPFDPISYAAGLTSIRFRSFFIATGLGQLPATIVYSWAGSMLTGGTFWFVTGLFILFALTVVIFMAKKIWLERQKRNA.

Residues 1–13 (MMMMQSRKIWYYR) are Periplasmic-facing. A helical transmembrane segment spans residues 14–34 (ITLIILLFAMLLAWALLPGVH). Residues 35-64 (EFINRSVAAFAAVDQQGIERFIQSYGALAA) are Cytoplasmic-facing. Residues 65-85 (VVSFLLMILQAIAAPLPAFLI) traverse the membrane as a helical segment. Over 86–95 (TFANASLFGA) the chain is Periplasmic. The tract at residues 90 to 199 (ASLFGAFWGG…IVYSWAGSML (110 aa)) is VTT domain. Residues 96 to 116 (FWGGLLSWTSSMAGAALCFFI) form a helical membrane-spanning segment. Residues 117–176 (ARVMGREVVEKLTGKTVLDSMDGFFTRYGKHTILVCRLLPFVPFDPISYAAGLTSIRFRS) lie on the Cytoplasmic side of the membrane. A helical membrane pass occupies residues 177-197 (FFIATGLGQLPATIVYSWAGS). Residues 198-202 (MLTGG) lie on the Periplasmic side of the membrane. The chain crosses the membrane as a helical span at residues 203–223 (TFWFVTGLFILFALTVVIFMA). The Cytoplasmic segment spans residues 224–235 (KKIWLERQKRNA).

It belongs to the TVP38/TMEM64 family.

The protein resides in the cell inner membrane. This Escherichia coli (strain K12) protein is TVP38/TMEM64 family inner membrane protein YdjZ (ydjZ).